A 109-amino-acid chain; its full sequence is Thiosulfate sulfurtransferase GlpE (109 aa).

One can recognise a Rhodanese domain in the interval arginine 16–alanine 104. The active-site Cysteine persulfide intermediate is the cysteine 64.

This sequence belongs to the GlpE family.

It localises to the cytoplasm. The catalysed reaction is thiosulfate + hydrogen cyanide = thiocyanate + sulfite + 2 H(+). It carries out the reaction thiosulfate + [thioredoxin]-dithiol = [thioredoxin]-disulfide + hydrogen sulfide + sulfite + 2 H(+). Transferase that catalyzes the transfer of sulfur from thiosulfate to thiophilic acceptors such as cyanide or dithiols. May function in a CysM-independent thiosulfate assimilation pathway by catalyzing the conversion of thiosulfate to sulfite, which can then be used for L-cysteine biosynthesis. The protein is Thiosulfate sulfurtransferase GlpE of Pseudomonas fluorescens (strain Pf0-1).